A 486-amino-acid polypeptide reads, in one-letter code: Cephamycin export protein CmcT (486 aa).

14 helical membrane passes run 24-44 (VLACTAHFLVVFDTSVITVAL), 56-76 (ASLQWVVNSYTLAFAGLLLFG), 88-108 (VFLGGLAVFTLTSLIGGLATS), 121-141 (AGAAVLAPLAVTMLTTSFAEG), 153-173 (AVALVGGASGNLLGGVFTEFL), 178-198 (VLLVNVPIGIPVLFLAARVLA), 210-230 (LDLPGAVLATAGLTLLTLGVS), 241-261 (AVAVPLAGGLLALLAFVVVEA), 284-304 (LAMLLAGASQVPVWFFLTLSM), 317-337 (LGFVPHALVMLVVGLRVVPWL), 345-365 (VLIAAGAAIGALGFWWQSLLT), 369-389 (AYLGGILGPAVLISIGGGLVG), 418-438 (FGGAFGLAVLLTVTGSGTSGS), and 450-470 (FVGIAVFMLAIAVLTPVLPAL).

It belongs to the major facilitator superfamily.

The protein resides in the cell membrane. Functionally, involved in cephamycin export. The sequence is that of Cephamycin export protein CmcT (cmcT) from Amycolatopsis lactamdurans (Nocardia lactamdurans).